Consider the following 467-residue polypeptide: 3-isopropylmalate dehydratase large subunit (467 aa).

Positions 347, 408, and 411 each coordinate [4Fe-4S] cluster.

This sequence belongs to the aconitase/IPM isomerase family. LeuC type 1 subfamily. In terms of assembly, heterodimer of LeuC and LeuD. It depends on [4Fe-4S] cluster as a cofactor.

The enzyme catalyses (2R,3S)-3-isopropylmalate = (2S)-2-isopropylmalate. It functions in the pathway amino-acid biosynthesis; L-leucine biosynthesis; L-leucine from 3-methyl-2-oxobutanoate: step 2/4. Functionally, catalyzes the isomerization between 2-isopropylmalate and 3-isopropylmalate, via the formation of 2-isopropylmaleate. The protein is 3-isopropylmalate dehydratase large subunit of Bordetella pertussis (strain Tohama I / ATCC BAA-589 / NCTC 13251).